Consider the following 373-residue polypeptide: NAD-dependent protein deacetylase SIR2rp1 (373 aa).

The 338-residue stretch at 12-349 folds into the Deacetylase sirtuin-type domain; sequence HALGEPTVEG…LKLAECLGLR (338 aa). NAD(+)-binding positions include 39–59 and 124–127; these read GAGASVAAGIPDFRSSDTGIY and QNID. The active-site Proton acceptor is His-144. Zn(2+)-binding residues include Cys-152, Cys-155, Cys-176, and Cys-179. Residues 216 to 218 and 241 to 243 each bind NAD(+); these read GTS and NRE. Residues 263 to 313 form a disordered region; sequence DAVAKEGRSSSSQSRSPSASARREEGGTEDGSSSPNEEVEDASTSSSSDGY. Low complexity predominate over residues 271 to 282; the sequence is SSSSQSRSPSAS. Cys-335 contacts NAD(+).

This sequence belongs to the sirtuin family. Class I subfamily. It depends on Zn(2+) as a cofactor.

The protein localises to the nucleus. It carries out the reaction N(6)-acetyl-L-lysyl-[protein] + NAD(+) + H2O = 2''-O-acetyl-ADP-D-ribose + nicotinamide + L-lysyl-[protein]. Functionally, NAD-dependent deacetylase, which probably acts as a regulator of gene expression believed to help form modified chromatin structures on the genes it regulates. The protein is NAD-dependent protein deacetylase SIR2rp1 (SIR2rp1) of Leishmania major.